The sequence spans 228 residues: NAD(P)H-quinone oxidoreductase subunit K, chloroplastic (228 aa).

The [4Fe-4S] cluster site is built by Cys43, Cys44, Cys108, and Cys139.

This sequence belongs to the complex I 20 kDa subunit family. As to quaternary structure, NDH is composed of at least 16 different subunits, 5 of which are encoded in the nucleus. Requires [4Fe-4S] cluster as cofactor.

The protein localises to the plastid. It localises to the chloroplast thylakoid membrane. The enzyme catalyses a plastoquinone + NADH + (n+1) H(+)(in) = a plastoquinol + NAD(+) + n H(+)(out). It catalyses the reaction a plastoquinone + NADPH + (n+1) H(+)(in) = a plastoquinol + NADP(+) + n H(+)(out). Its function is as follows. NDH shuttles electrons from NAD(P)H:plastoquinone, via FMN and iron-sulfur (Fe-S) centers, to quinones in the photosynthetic chain and possibly in a chloroplast respiratory chain. The immediate electron acceptor for the enzyme in this species is believed to be plastoquinone. Couples the redox reaction to proton translocation, and thus conserves the redox energy in a proton gradient. The sequence is that of NAD(P)H-quinone oxidoreductase subunit K, chloroplastic from Ceratophyllum demersum (Rigid hornwort).